Consider the following 279-residue polypeptide: Nucleotide-binding protein THA_1518 (279 aa).

9 to 16 (GLSGAGKS) is an ATP binding site. 57-60 (DARS) lines the GTP pocket.

The protein belongs to the RapZ-like family.

Its function is as follows. Displays ATPase and GTPase activities. This is Nucleotide-binding protein THA_1518 from Thermosipho africanus (strain TCF52B).